Consider the following 395-residue polypeptide: Multidrug resistance protein MdtL (395 aa).

A run of 12 helical transmembrane segments spans residues 4–24 (FLLC…MYLV), 42–62 (IAFS…GKIA), 69–89 (PVAI…SRAS), 93–113 (LFLS…VVAF), 131–151 (LLNG…HLIM), 158–178 (SLFY…LFIL), 217–237 (VSVI…VMGF), 247–267 (ALTA…LGLF), 271–291 (TLML…SLAH), 295–315 (VTLF…GVAM), 328–350 (VASS…LAAI), and 355–377 (AMNM…IFSV).

The protein belongs to the major facilitator superfamily. DHA1 family. MdtL (TC 2.A.1.2.22) subfamily.

The protein resides in the cell inner membrane. This is Multidrug resistance protein MdtL from Salmonella schwarzengrund (strain CVM19633).